The following is a 382-amino-acid chain: Sad1-interacting factor 2 (382 aa).

A Phosphoserine modification is found at Ser-135. A helical transmembrane segment spans residues 356-376; that stretch reads EWIVVILMGLLVLIALFSIVV.

The protein belongs to the RMD1/sif2 family. Interacts with sad1.

It localises to the nucleus membrane. Functionally, required for sporulation where it is believed to have a role in meiotic nuclear division. This is Sad1-interacting factor 2 (sif2) from Schizosaccharomyces pombe (strain 972 / ATCC 24843) (Fission yeast).